The sequence spans 290 residues: Nucleotide-binding protein Bpet0443 (290 aa).

9–16 is an ATP binding site; sequence GISGSGKS. Position 58–61 (58–61) interacts with GTP; sequence DVRS.

Belongs to the RapZ-like family.

Its function is as follows. Displays ATPase and GTPase activities. In Bordetella petrii (strain ATCC BAA-461 / DSM 12804 / CCUG 43448), this protein is Nucleotide-binding protein Bpet0443.